The sequence spans 404 residues: Probable ketol-acid reductoisomerase, mitochondrial (404 aa).

The KARI N-terminal Rossmann domain maps to 63-253; it reads TKENVWERSD…AVGSGFIYQT (191 aa). NADP(+) contacts are provided by residues 91-100, 115-120, and 153-157; these read GYGSQGHGQG, RKDGAS, and SDAAQ. Histidine 178 is a catalytic residue. Residues 254-401 enclose the KARI C-terminal knotted domain; the sequence is TFKKEVISDL…EVVRSLRPEH (148 aa). Serine 261 is subject to Phosphoserine. Positions 262, 266, 298, and 302 each coordinate Mg(2+). Serine 324 is a substrate binding site.

It belongs to the ketol-acid reductoisomerase family. Mg(2+) serves as cofactor.

It is found in the mitochondrion. The enzyme catalyses (2R)-2,3-dihydroxy-3-methylbutanoate + NADP(+) = (2S)-2-acetolactate + NADPH + H(+). It catalyses the reaction (2R,3R)-2,3-dihydroxy-3-methylpentanoate + NADP(+) = (S)-2-ethyl-2-hydroxy-3-oxobutanoate + NADPH + H(+). The protein operates within amino-acid biosynthesis; L-isoleucine biosynthesis; L-isoleucine from 2-oxobutanoate: step 2/4. It participates in amino-acid biosynthesis; L-valine biosynthesis; L-valine from pyruvate: step 2/4. In Schizosaccharomyces pombe (strain 972 / ATCC 24843) (Fission yeast), this protein is Probable ketol-acid reductoisomerase, mitochondrial (ilv5).